A 274-amino-acid chain; its full sequence is MSFVSKSPPIVNSASPTGQVNPMEVEKANKLLEINRLILWKCLELQHIKTAQNSTLEQRALSTELFNSYIQRLKANLAFVVSIASPRQMQVLTPPLSCPESLPQLEPLYKELRQYFQIAQTSTLSYPPSNGDSSSYANGTDLHGNTGTMQQEEKANPSLTRSDSVSSGSYITMQGANSLKAQQDLLNSFTGAPSNNSHNIPDPNLSQTFSATSMGPPNNNYSKFRTDNYLARSSNRSGTPNIQNEQSRFFDSQQAQVQARALMQRYQQGMEFNK.

Polar residues-rich tracts occupy residues 123–150 (TLSYPPSNGDSSSYANGTDLHGNTGTMQ) and 157–167 (PSLTRSDSVSS). A disordered region spans residues 123–167 (TLSYPPSNGDSSSYANGTDLHGNTGTMQQEEKANPSLTRSDSVSS).

In terms of assembly, component of the SWI/SNF global transcription activator complex composed of at least arp9, arp42, snf5, snf22, snf30, sbf59, sol1, ssr1, ssr2, ssr3, ssr4 and tfg3.

It is found in the cytoplasm. It localises to the nucleus. Its function is as follows. Component of the SWI/SNF complex, an ATP-dependent chromatin remodeling complex, required for the positive and negative regulation of gene expression of a large number of genes. It changes chromatin structure by altering DNA-histone contacts within a nucleosome, leading eventually to a change in nucleosome position, thus facilitating or repressing binding of gene-specific transcription factors. In Schizosaccharomyces pombe (strain 972 / ATCC 24843) (Fission yeast), this protein is SWI/SNF chromatin-remodeling complex subunit snf30 (snf30).